Consider the following 465-residue polypeptide: 3-isopropylmalate dehydratase large subunit (465 aa).

The [4Fe-4S] cluster site is built by C346, C406, and C409.

It belongs to the aconitase/IPM isomerase family. LeuC type 1 subfamily. As to quaternary structure, heterodimer of LeuC and LeuD. [4Fe-4S] cluster serves as cofactor.

The enzyme catalyses (2R,3S)-3-isopropylmalate = (2S)-2-isopropylmalate. The protein operates within amino-acid biosynthesis; L-leucine biosynthesis; L-leucine from 3-methyl-2-oxobutanoate: step 2/4. Catalyzes the isomerization between 2-isopropylmalate and 3-isopropylmalate, via the formation of 2-isopropylmaleate. In Leptospira interrogans serogroup Icterohaemorrhagiae serovar copenhageni (strain Fiocruz L1-130), this protein is 3-isopropylmalate dehydratase large subunit.